We begin with the raw amino-acid sequence, 357 residues long: Peptide chain release factor 1 (357 aa).

The residue at position 232 (glutamine 232) is an N5-methylglutamine. Residues 281–305 (DRQHNEMAADRRSQVGSGDRSERIR) are compositionally biased toward basic and acidic residues. The tract at residues 281-309 (DRQHNEMAADRRSQVGSGDRSERIRTYNF) is disordered.

This sequence belongs to the prokaryotic/mitochondrial release factor family. In terms of processing, methylated by PrmC. Methylation increases the termination efficiency of RF1.

It localises to the cytoplasm. Functionally, peptide chain release factor 1 directs the termination of translation in response to the peptide chain termination codons UAG and UAA. The polypeptide is Peptide chain release factor 1 (Nitratidesulfovibrio vulgaris (strain DSM 19637 / Miyazaki F) (Desulfovibrio vulgaris)).